Consider the following 465-residue polypeptide: Soluble pyridine nucleotide transhydrogenase (465 aa).

FAD is bound at residue 35 to 44 (ERYNNVGGGC).

This sequence belongs to the class-I pyridine nucleotide-disulfide oxidoreductase family. FAD is required as a cofactor.

Its subcellular location is the cytoplasm. The catalysed reaction is NAD(+) + NADPH = NADH + NADP(+). Functionally, conversion of NADPH, generated by peripheral catabolic pathways, to NADH, which can enter the respiratory chain for energy generation. In Photorhabdus laumondii subsp. laumondii (strain DSM 15139 / CIP 105565 / TT01) (Photorhabdus luminescens subsp. laumondii), this protein is Soluble pyridine nucleotide transhydrogenase.